Here is a 225-residue protein sequence, read N- to C-terminus: Membrane protein (225 aa).

Topologically, residues 1–20 are virion surface; it reads MPNETNCTLDFEQSVQLFKE. A helical membrane pass occupies residues 21–41; the sequence is YNLFITAFLLFLTIILQYGYA. Residues 42–51 are Intravirion-facing; the sequence is TRSKVIYTLK. Residues 52–72 form a helical membrane-spanning segment; sequence MIVLWCFWPLNIAVGVISCTY. The Virion surface portion of the chain corresponds to 73-77; sequence PPNTG. Residues 78–98 traverse the membrane as a helical segment; that stretch reads GLVAAIILTVFACLSFVGYWI. Over 99–225 the chain is Intravirion; it reads QSIRLFKRCR…VATGGSSLYT (127 aa).

It belongs to the gammacoronaviruses M protein family. In terms of assembly, homomultimer. Interacts with envelope E protein in the budding compartment of the host cell, which is located between endoplasmic reticulum and the Golgi complex. Forms a complex with HE and S proteins. Interacts with nucleocapsid N protein. This interaction probably participates in RNA packaging into the virus.

Its subcellular location is the virion membrane. The protein resides in the host Golgi apparatus membrane. Its function is as follows. Component of the viral envelope that plays a central role in virus morphogenesis and assembly via its interactions with other viral proteins. This is Membrane protein from Avian infectious bronchitis virus (strain Beaudette) (IBV).